Reading from the N-terminus, the 145-residue chain is MNFKYIVAVSFLIASAYARSVQNDEQSLSQRDVLEEEESLREIRGIGGKILSGLKTALKGAAKELASTYLHRKRTAEEHEVMKRLEAVMRDLDSLDYPEEASERETRGFNQDEIANLFTKKEKRILGPVLGLVSNALGGLIKKIG.

The N-terminal stretch at 1–18 is a signal peptide; it reads MNFKYIVAVSFLIASAYA. Propeptides lie at residues 19–43 and 74–124; these read RSVQ…LREI and RTAE…KEKR. Residue I144 is modified to Isoleucine amide.

It belongs to the bombinin family. Expressed by the skin glands.

The protein localises to the secreted. Its function is as follows. Maximin-3 shows antibacterial activity against both Gram-positive and Gram-negative bacteria. It also shows antimicrobial activity against the fungus C.albicans, but not against A.flavus nor P.uticale. It has little hemolytic activity. It possess a significant cytotoxicity against tumor cell lines. It possess a significant anti-HIV activity. It shows high spermicidal activity. Maximin-H9 shows antimicrobial activity against bacteria and against the fungus C.albicans. Shows strong hemolytic activity. The chain is Maximins 3/H9 type 1 from Bombina maxima (Giant fire-bellied toad).